The following is a 544-amino-acid chain: MCTHTGHSAAPSLSGLIDAEPCHFWLPLMPNEPTDVLPPTSFNVPFGTRPGIAALGERFFTRLSPTPLPSPYLVSVAPAAAALLGWNETDLQDAVKDPAFIDSFVGNAVPDWADPLATVYSGHQFGVWAGQLGDGRAIRLAEAQTPGGPWEIQLKGGGLTPYSRMADGRAVLRSSIREYLCSEAMYALGVPTTRALSIIGSDAPVRRETIETSAVVTRLAPSFIRFGHFEHFAAREDHASLRQLADFVIDNFYPACRNAANPYQALLRDVSLLTADMVAHWQAVGFCHGVMNTDNMSILGLTIDYGPFGFLDAFDANHICNHSDQQGRYAYSQQPQVAFWNLHCLAQALLPLWRDANAADPEAEKAAAVEAAREALDPFRDRYAEAFFRHYRAKLGLRSEQEQDETLMTNLFRVLHENRVDYTSFWRNLSRVSSLDNSHDAAVRDLFLDRAAWDAWAAEYRARLQSEQSDDAARTTAMLATNPKYVLRNHMAETAIRAARDKDFSEVDRLMAVLSKPFDEQPEAESYAKLPPDWASGLEVSCSS.

Gly133, Gly135, Arg136, Lys155, Asp167, Gly168, Arg218, and Arg225 together coordinate ATP. Residue Asp294 is the Proton acceptor of the active site. Positions 295 and 304 each coordinate Mg(2+). Asp304 is a binding site for ATP.

This sequence belongs to the SELO family. The cofactor is Mg(2+). Mn(2+) is required as a cofactor.

It carries out the reaction L-seryl-[protein] + ATP = 3-O-(5'-adenylyl)-L-seryl-[protein] + diphosphate. The enzyme catalyses L-threonyl-[protein] + ATP = 3-O-(5'-adenylyl)-L-threonyl-[protein] + diphosphate. It catalyses the reaction L-tyrosyl-[protein] + ATP = O-(5'-adenylyl)-L-tyrosyl-[protein] + diphosphate. The catalysed reaction is L-histidyl-[protein] + UTP = N(tele)-(5'-uridylyl)-L-histidyl-[protein] + diphosphate. It carries out the reaction L-seryl-[protein] + UTP = O-(5'-uridylyl)-L-seryl-[protein] + diphosphate. The enzyme catalyses L-tyrosyl-[protein] + UTP = O-(5'-uridylyl)-L-tyrosyl-[protein] + diphosphate. Nucleotidyltransferase involved in the post-translational modification of proteins. It can catalyze the addition of adenosine monophosphate (AMP) or uridine monophosphate (UMP) to a protein, resulting in modifications known as AMPylation and UMPylation. The protein is Protein nucleotidyltransferase YdiU of Cupriavidus metallidurans (strain ATCC 43123 / DSM 2839 / NBRC 102507 / CH34) (Ralstonia metallidurans).